The sequence spans 137 residues: Putative pre-16S rRNA nuclease (137 aa).

This sequence belongs to the YqgF nuclease family.

It is found in the cytoplasm. Could be a nuclease involved in processing of the 5'-end of pre-16S rRNA. This is Putative pre-16S rRNA nuclease from Clostridium botulinum (strain Eklund 17B / Type B).